We begin with the raw amino-acid sequence, 438 residues long: uncharacterized protein (438 aa).

An FAD-binding PCMH-type domain is found at Ile-23–Ala-193. Residues Val-55 to Gly-59, His-60 to Ser-61, Gln-65, Asp-117, Thr-122, Ser-128 to Phe-132, Ile-183, Tyr-393, and Ala-430 to Tyr-433 each bind FAD. At His-60 the chain carries Pros-8alpha-FAD histidine.

It belongs to the oxygen-dependent FAD-linked oxidoreductase family. FAD is required as a cofactor.

Functionally, the FAS-operon encodes genes involved in cytokinin production and in host plant fasciation (leafy gall). This is an uncharacterized protein from Rhodococcoides fascians (Rhodococcus fascians).